A 192-amino-acid chain; its full sequence is Dynein axonemal light chain 1 (192 aa).

LRR repeat units follow at residues 49 to 70 (NCEK…NGLK), 71 to 92 (YLKI…EAVG), 94 to 115 (TLEE…HVMK), and 116 to 137 (KLKV…SKLG). Positions 150 to 192 (NPLEEKHTAEGNWMEEAVKRLPKLKKLDGNPVIKQEEEEGDES) constitute an LRRCT domain.

Belongs to the dynein light chain LC1-type family. In terms of assembly, interacts with DNAH5, a outer arm dynein heavy chain. Interacts with tubulin located within the A-tubule of the outer doublets in a ATP-independent manner.

It is found in the cytoplasm. It localises to the cytoskeleton. Its subcellular location is the cilium axoneme. Functionally, part of the multisubunit axonemal ATPase complexes that generate the force for cilia motility and govern beat frequency. Component of the outer arm dynein (ODA). May be involved in a mechanosensory feedback mechanism controlling ODA activity based on external conformational cues by tethering the outer arm dynein heavy chain (DNAH5) to the microtubule within the axoneme. This Xenopus laevis (African clawed frog) protein is Dynein axonemal light chain 1 (dnal1).